The chain runs to 126 residues: Protein ApaG (126 aa).

An ApaG domain is found at Ser-2–Gln-126.

This Shewanella frigidimarina (strain NCIMB 400) protein is Protein ApaG.